The following is a 209-amino-acid chain: Thymidylate kinase (209 aa).

10–17 lines the ATP pocket; sequence GIDGCGKS.

Belongs to the thymidylate kinase family.

It carries out the reaction dTMP + ATP = dTDP + ADP. Functionally, phosphorylation of dTMP to form dTDP in both de novo and salvage pathways of dTTP synthesis. This chain is Thymidylate kinase, found in Synechococcus sp. (strain CC9902).